The following is a 418-amino-acid chain: Endoglucanase EG-II (418 aa).

The N-terminal stretch at 1–21 (MNKSVAPLLLAASILYGGAVA) is a signal peptide. Gln22 bears the Pyrrolidone carboxylic acid mark. The region spanning 22 to 57 (QQTVWGQCGGIGWSGPTNCAPGSACSTLNPYYAQCI) is the CBM1 domain. Residues 58-91 (PGATTITTSTRPPSGPTTTTRATSTSSSTPPTSS) form a linker region. Residues 63 to 91 (ITTSTRPPSGPTTTTRATSTSSSTPPTSS) are disordered. The segment at 92-418 (GVRFAGVNIA…SLVSSCLARK (327 aa)) is catalytic. Cys107 and Cys113 form a disulfide bridge. The N-linked (GlcNAc) asparagine glycan is linked to Asn124. Cysteines 183 and 190 form a disulfide. Catalysis depends on Glu239, which acts as the Proton donor/acceptor. 2 disulfides stabilise this stretch: Cys323–Cys359 and Cys364–Cys414. Glu350 functions as the Nucleophile in the catalytic mechanism.

Belongs to the glycosyl hydrolase 5 (cellulase A) family.

The protein resides in the secreted. It carries out the reaction Endohydrolysis of (1-&gt;4)-beta-D-glucosidic linkages in cellulose, lichenin and cereal beta-D-glucans.. Its function is as follows. Endoglucanase (EG) that cleaves the internal beta-1,4-glucosidic bonds in cellulose. The degradation of cellulose involves an interplay between different cellulolytic enzymes. Hydrolysis starts with EGs, which cut internal glycosidic linkages to reduce the polymerization degree of the substrate and creates new chain ends for exocellobiohydrolases (CBHs). The CBH release the disaccharide cellobiose from the non-reducing end of the cellulose polymer chain. Finally, beta-1,4-glucosidases hydrolyze the cellobiose and other short cello-oligosaccharides into glucose units. The protein is Endoglucanase EG-II (egl2) of Hypocrea jecorina (Trichoderma reesei).